A 455-amino-acid polypeptide reads, in one-letter code: UDP-N-acetylmuramoylalanine--D-glutamate ligase (455 aa).

112 to 118 lines the ATP pocket; the sequence is GTNGKTT.

Belongs to the MurCDEF family.

The protein resides in the cytoplasm. The enzyme catalyses UDP-N-acetyl-alpha-D-muramoyl-L-alanine + D-glutamate + ATP = UDP-N-acetyl-alpha-D-muramoyl-L-alanyl-D-glutamate + ADP + phosphate + H(+). It functions in the pathway cell wall biogenesis; peptidoglycan biosynthesis. In terms of biological role, cell wall formation. Catalyzes the addition of glutamate to the nucleotide precursor UDP-N-acetylmuramoyl-L-alanine (UMA). This Trichormus variabilis (strain ATCC 29413 / PCC 7937) (Anabaena variabilis) protein is UDP-N-acetylmuramoylalanine--D-glutamate ligase.